The chain runs to 323 residues: Glyoxylate/hydroxypyruvate reductase HPR3 (323 aa).

Residues 160 to 163, 182 to 184, and 238 to 240 each bind NADP(+); these read LGSI, SRS, and VGR. Catalysis depends on residues R240 and E269. Residue H287 is the Proton donor of the active site. Position 287–289 (287–289) interacts with NADP(+); that stretch reads HFA.

This sequence belongs to the D-isomer specific 2-hydroxyacid dehydrogenase family. GyaR subfamily. As to quaternary structure, homodimer.

It carries out the reaction glycolate + NADP(+) = glyoxylate + NADPH + H(+). It catalyses the reaction (R)-glycerate + NADP(+) = 3-hydroxypyruvate + NADPH + H(+). Its activity is regulated as follows. Inhibited by oxalate. In terms of biological role, catalyzes the NADPH-dependent reduction of glyoxylate and hydroxypyruvate (HP) into glycolate and glycerate. Mostly active in the presence of NADPH and glyoxylate. The polypeptide is Glyoxylate/hydroxypyruvate reductase HPR3 (HPR3) (Arabidopsis thaliana (Mouse-ear cress)).